The following is a 198-amino-acid chain: V-type ATP synthase subunit E (198 aa).

This sequence belongs to the V-ATPase E subunit family.

Functionally, produces ATP from ADP in the presence of a proton gradient across the membrane. This is V-type ATP synthase subunit E from Acetivibrio thermocellus (strain ATCC 27405 / DSM 1237 / JCM 9322 / NBRC 103400 / NCIMB 10682 / NRRL B-4536 / VPI 7372) (Clostridium thermocellum).